Here is a 520-residue protein sequence, read N- to C-terminus: Sensory neuron membrane protein 2 (520 aa).

The Cytoplasmic segment spans residues 1 to 7 (MLGKHSK). Residues 8–28 (IFFGVSLIFLVIAIVLASWGF) form a helical membrane-spanning segment. Residues 29 to 468 (QKIVNKQIQK…DSHKLLGYVE (440 aa)) lie on the Extracellular side of the membrane. 7 N-linked (GlcNAc...) asparagine glycosylation sites follow: Asn44, Asn67, Asn104, Asn228, Asn271, Asn313, and Asn342. 3 cysteine pairs are disulfide-bonded: Cys267-Cys337, Cys298-Cys361, and Cys339-Cys350. A helical transmembrane segment spans residues 469-489 (VAKWFLLTIAIISVIASAVAV). Over 490–520 (ARANALLSWPRNSNSVSFILGPSVTQVNKGN) the chain is Cytoplasmic.

The protein belongs to the CD36 family. Localizes to cells surrounding the sensory neurons in the antenna. Associate in a ratio of 2:1 with the neurons expressing the other subtype SNMP1.

It is found in the cell membrane. Functionally, plays an olfactory role that is not restricted to pheromone sensitivity. May play a role in the elimination of lipophilic components from the sensillum lymph. The polypeptide is Sensory neuron membrane protein 2 (Heliothis virescens (Tobacco budworm moth)).